A 1439-amino-acid chain; its full sequence is Fanconi anemia group D2 protein (1439 aa).

Residue K563 forms a Glycyl lysine isopeptide (Lys-Gly) (interchain with G-Cter in ubiquitin) linkage.

This sequence belongs to the Fanconi anemia protein FANCD2 family. As to quaternary structure, homodimer; cannot be ubiquitinated and does not bind DNA. Part of a FANCI-FANCD2 heterodimeric complex that binds and scans dsDNA for DNA damage. Interacts directly with FANCE and FANCI. Interacts with USP1 and MEN1. The ubiquitinated form specifically interacts with BRCA1 and BLM. Both the nonubiquitinated and the monoubiquitinated forms interact with BRCA2; this interaction is mediated by phosphorylated FANCG and the complex also includes XCCR3. The ubiquitinated form specifically interacts with MTMR15/FAN1 (via UBZ-type zinc finger), leading to recruit MTMR15/FAN1 to sites of DNA damage. Interacts with DCLRE1B/Apollo. Interacts with POLN. Interacts with UHRF1 and UHRF2; these interactions promote FANCD2 activation. Post-translationally, monoubiquitinated on Lys-563 during S phase and upon genotoxic stress. Deubiquitinated by USP1 as cells enter G2/M, or once DNA repair is completed. Monoubiquitination prevents DNA release from the FANCI-FANCD2 complex. FANCD2 is only ubiquitinated in the FANCI-FANCD2 complex and the monoubiquitination of FANCD2 is promoted by phosphorylation of FANCI. Phosphorylated in response to various genotoxic stresses by ATM and/or ATR.

It localises to the nucleus. Its function is as follows. Required for maintenance of chromosomal stability. Promotes accurate and efficient pairing of homologs during meiosis. Involved in the repair of DNA double-strand breaks, both by homologous recombination and single-strand annealing. The FANCI-FANCD2 complex binds and scans double-stranded DNA (dsDNA) for DNA damage; this complex stalls at DNA junctions between double-stranded DNA and single-stranded DNA. May participate in S phase and G2 phase checkpoint activation upon DNA damage. Plays a role in preventing breakage and loss of missegregating chromatin at the end of cell division, particularly after replication stress. Required for the targeting, or stabilization, of BLM to non-centromeric abnormal structures induced by replicative stress. Promotes BRCA2/FANCD1 loading onto damaged chromatin. May also be involved in B-cell immunoglobulin isotype switching. This Gallus gallus (Chicken) protein is Fanconi anemia group D2 protein.